Consider the following 194-residue polypeptide: Peptidyl-tRNA hydrolase (194 aa).

Residue tyrosine 17 participates in tRNA binding. The active-site Proton acceptor is histidine 22. TRNA is bound by residues phenylalanine 68, asparagine 70, and asparagine 116.

It belongs to the PTH family. In terms of assembly, monomer.

It is found in the cytoplasm. The enzyme catalyses an N-acyl-L-alpha-aminoacyl-tRNA + H2O = an N-acyl-L-amino acid + a tRNA + H(+). In terms of biological role, hydrolyzes ribosome-free peptidyl-tRNAs (with 1 or more amino acids incorporated), which drop off the ribosome during protein synthesis, or as a result of ribosome stalling. Catalyzes the release of premature peptidyl moieties from peptidyl-tRNA molecules trapped in stalled 50S ribosomal subunits, and thus maintains levels of free tRNAs and 50S ribosomes. The sequence is that of Peptidyl-tRNA hydrolase from Shewanella halifaxensis (strain HAW-EB4).